Consider the following 104-residue polypeptide: Large ribosomal subunit protein uL24 (104 aa).

It belongs to the universal ribosomal protein uL24 family. As to quaternary structure, part of the 50S ribosomal subunit.

One of two assembly initiator proteins, it binds directly to the 5'-end of the 23S rRNA, where it nucleates assembly of the 50S subunit. Its function is as follows. One of the proteins that surrounds the polypeptide exit tunnel on the outside of the subunit. In Psychromonas ingrahamii (strain DSM 17664 / CCUG 51855 / 37), this protein is Large ribosomal subunit protein uL24.